A 120-amino-acid chain; its full sequence is Large ribosomal subunit protein bL20 (120 aa).

It belongs to the bacterial ribosomal protein bL20 family.

In terms of biological role, binds directly to 23S ribosomal RNA and is necessary for the in vitro assembly process of the 50S ribosomal subunit. It is not involved in the protein synthesizing functions of that subunit. The chain is Large ribosomal subunit protein bL20 from Desulforudis audaxviator (strain MP104C).